The following is a 398-amino-acid chain: Yellow-related salivary protein SP04 (398 aa).

Positions 1 to 18 are cleaved as a signal peptide; the sequence is MKWFLFLLSTIFVQGILG. The disordered stretch occupies residues 73-94; it reads TLTEIERKKHPERSPPLSKFSG. The span at 75–85 shows a compositional bias: basic and acidic residues; the sequence is TEIERKKHPER.

It belongs to the major royal jelly protein family. In terms of tissue distribution, female salivary gland (at protein level).

The protein localises to the secreted. In terms of biological role, probably modulates blood feeding of sand flies on vertebrate species by binding and sequestering different mediators involved in the host response. Binds biogenic amines. Binds serotonin with high affinity. Binds histamine with low affinity. The protein is Yellow-related salivary protein SP04 of Phlebotomus argentipes (Phlebotomine sand fly).